The primary structure comprises 523 residues: Apoptosis inhibitor 5 (523 aa).

The interval 1-360 is ARM-like and Heat-like helical repeats; the sequence is MPTVEELYRN…HQLGRKLPDF (360 aa). The interval 446–523 is disordered; sequence VQKADANQKR…RGNRSRGRIY (78 aa). Residues 454–475 carry the Nuclear localization signal motif; the sequence is KRTSEDTTSSSPPKKASAGPKR. Residues 460–471 are compositionally biased toward low complexity; it reads TTSSSPPKKASA. Residues 487-497 are compositionally biased toward polar residues; the sequence is KYSSNLGSFSY. The span at 502–515 shows a compositional bias: gly residues; the sequence is GFRGGRGRGWGGRG.

It belongs to the API5 family. Monomer.

It is found in the nucleus. The protein resides in the cytoplasm. In terms of biological role, antiapoptotic factor that may have a role in protein assembly. The protein is Apoptosis inhibitor 5 (API5) of Gallus gallus (Chicken).